Reading from the N-terminus, the 505-residue chain is Sucrose porin (505 aa).

The first 22 residues, 1–22 (MYRKSTLAMLIALLTSAASAHA), serve as a signal peptide directing secretion. Residues 44–87 (ENRAQTAENRAGAAEKKVQQLTAQQQKNQNSTQEVAQRTARLEK) are disordered. The segment covering 62-72 (QQLTAQQQKNQ) has biased composition (low complexity).

The protein belongs to the porin LamB (TC 1.B.3) family. As to quaternary structure, homotrimer.

Its subcellular location is the cell outer membrane. Porin for sucrose uptake. The protein is Sucrose porin (scrY) of Salmonella typhimurium.